Reading from the N-terminus, the 157-residue chain is S-ribosylhomocysteine lyase (157 aa).

Fe cation is bound by residues His54, His58, and Cys124.

It belongs to the LuxS family. In terms of assembly, homodimer. It depends on Fe cation as a cofactor.

It catalyses the reaction S-(5-deoxy-D-ribos-5-yl)-L-homocysteine = (S)-4,5-dihydroxypentane-2,3-dione + L-homocysteine. Its function is as follows. Involved in the synthesis of autoinducer 2 (AI-2) which is secreted by bacteria and is used to communicate both the cell density and the metabolic potential of the environment. The regulation of gene expression in response to changes in cell density is called quorum sensing. Catalyzes the transformation of S-ribosylhomocysteine (RHC) to homocysteine (HC) and 4,5-dihydroxy-2,3-pentadione (DPD). The polypeptide is S-ribosylhomocysteine lyase (Pediococcus pentosaceus (strain ATCC 25745 / CCUG 21536 / LMG 10740 / 183-1w)).